Here is a 136-residue protein sequence, read N- to C-terminus: ATP synthase F(0) complex subunit C1, mitochondrial (136 aa).

The transit peptide at 1 to 61 (MQTTGALLIS…REFQTSVVSR (61 aa)) directs the protein to the mitochondrion. Residues 77 to 97 (VGVAGSGAGIGTVFGSLIIGY) traverse the membrane as a helical segment. An N6,N6,N6-trimethyllysine modification is found at lysine 104. Residues 112-132 (ILGFALFEAMGLFCLMVAFLI) form a helical membrane-spanning segment.

Belongs to the ATPase C chain family. Homooctamer; the c-ring consists of eight c subunits forming a circle, and each subunit adopts a hairpin shape. Component of the ATP synthase complex composed at least of ATP5F1A/subunit alpha, ATP5F1B/subunit beta, ATP5MC1/subunit c (homooctomer), MT-ATP6/subunit a, MT-ATP8/subunit 8, ATP5ME/subunit e, ATP5MF/subunit f, ATP5MG/subunit g, ATP5MK/subunit k, ATP5MJ/subunit j, ATP5F1C/subunit gamma, ATP5F1D/subunit delta, ATP5F1E/subunit epsilon, ATP5PF/subunit F6, ATP5PB/subunit b, ATP5PD/subunit d, ATP5PO/subunit OSCP. ATP synthase complex consists of a soluble F(1) head domain (subunits alpha(3) and beta(3)) - the catalytic core - and a membrane F(0) domain - the membrane proton channel (subunits c, a, 8, e, f, g, k and j). These two domains are linked by a central stalk (subunits gamma, delta, and epsilon) rotating inside the F1 region and a stationary peripheral stalk (subunits F6, b, d, and OSCP). Interacts with TMEM70 (homooligomer form); this interaction facilitates the oligomer formation of subunit c/ATP5MC1 (c-ring) and the c-ring membrane insertion and also protects ATP5MC1 against intramitochondrial proteolysis. In terms of processing, trimethylated by ATPSCKMT at Lys-104. Methylation is required for proper incorporation of the C subunit into the ATP synthase complex and mitochondrial respiration.

The protein resides in the mitochondrion membrane. It carries out the reaction H(+)(in) = H(+)(out). Its function is as follows. Subunit c, of the mitochondrial membrane ATP synthase complex (F(1)F(0) ATP synthase or Complex V) that produces ATP from ADP in the presence of a proton gradient across the membrane which is generated by electron transport complexes of the respiratory chain. ATP synthase complex consist of a soluble F(1) head domain - the catalytic core - and a membrane F(1) domain - the membrane proton channel. These two domains are linked by a central stalk rotating inside the F(1) region and a stationary peripheral stalk. During catalysis, ATP synthesis in the catalytic domain of F(1) is coupled via a rotary mechanism of the central stalk subunits to proton translocation. With the subunit a (MT-ATP6), forms the proton-conducting channel in the F(0) domain, that contains two crucial half-channels (inlet and outlet) that facilitate proton movement from the mitochondrial intermembrane space (IMS) into the matrix. Protons are taken up via the inlet half-channel and released through the outlet half-channel, following a Grotthuss mechanism. This Sus scrofa (Pig) protein is ATP synthase F(0) complex subunit C1, mitochondrial.